Reading from the N-terminus, the 131-residue chain is Global transcriptional regulator Spx (131 aa).

The short motif at 10-13 is the CXXC element; the sequence is CTSC. Cysteines 10 and 13 form a disulfide.

This sequence belongs to the ArsC family. Spx subfamily. In terms of assembly, interacts with the C-terminal domain of the alpha subunit of the RNAP. A single Spx monomer interacts with RNAP to form the transcription activation complex. Interacts with the adapter protein SpxH/YjbH.

Its subcellular location is the cytoplasm. Under non-stress conditions, Spx is degraded by ClpXP and, to a lesser extent, by ClpCP. Efficient dedradation by ClpXP requires the adapter protein SpxH/YjbH. Binding to SpxH/YjbH reduces the overall conformational flexibility of Spx and stabilizes the C-terminal ClpX recognition region of Spx. In addition, activity is modulated by the formation of a disulfide bound within the N-terminal Cys-X-X-Cys (CXXC) motif, which is required for the transcriptional activation of trxA and trxB, or for the activation of msrAB operon expression following paraquat oxidative stress. However, it seems that formation of the disulfide bound is not essential for induction of all Spx-controlled genes, as for example the case of BSH biosynthesis genes. Similarly, induction of the Spx regulon during cell wall stress is not accompanied by oxidation of the disulfide switch, but requires Spx stabilization by the anti-adapter protein SpxO/YirB. Functionally, global transcriptional regulator that plays a key role in stress response and exerts either positive or negative regulation of genes. Acts by interacting with the C-terminal domain of the alpha subunit of the RNA polymerase (RNAP). This interaction can enhance binding of RNAP to the promoter region of target genes and stimulate their transcription, or block interaction of RNAP with activator proteins and repress transcription. Exhibits no DNA-binding activity. In terms of biological role, induces the expression of a large number of genes in response to a variety of stress conditions, such as disulfide, heat and cell wall stress, while concurrently repressing transcription of genes involved in various developmental and growth-related pathways during periods of extreme stress. Functions in the oxidative stress response via induction of the transcription of thioredoxin (trxA) and thioredoxin reductase (trxB) during thiol-specific oxidative (disulfide) stress. Mediates response to oxidative stress caused by paraquat (PQ) via induction of the methionine sulfoxide reductase genes, msrA and msrB. Also acts as a transcriptional activator of the bacillithiol (BSH) biosynthesis genes in response to oxidizing conditions and thio-reactive compounds. Involved in heat stress response and thermotolerance development, which results in diminished cellular protein aggregates. Plays an important adaptive role in the cell wall stress response. Participates in sulfate-dependent control of organosulfur metabolism. Negatively controls, via CymR, the expression of the organosulfur utilization operons ytmI, yxeI and ssu, and directly activates yrrT operon expression during growth in medium containing methionine as sole sulfur source. Negatively affects competence and sporulation. Inhibits biofilm formation in response to disulfide stress by repressing biofilm matrix genes. In Bacillus subtilis (strain 168), this protein is Global transcriptional regulator Spx.